A 192-amino-acid polypeptide reads, in one-letter code: Putative manganese efflux pump MntP (192 aa).

6 consecutive transmembrane segments (helical) span residues 2-22 (IAII…AFAV), 41-61 (SALW…YAAS), 62-82 (AFSA…LAFI), 109-129 (MLPL…SLAF), 136-156 (FAIL…LYIG), and 172-192 (GVVL…VIAF).

Belongs to the MntP (TC 9.B.29) family.

It is found in the cell membrane. Its function is as follows. Probably functions as a manganese efflux pump. This chain is Putative manganese efflux pump MntP, found in Bifidobacterium longum subsp. infantis (strain ATCC 15697 / DSM 20088 / JCM 1222 / NCTC 11817 / S12).